Reading from the N-terminus, the 92-residue chain is Small ribosomal subunit protein uS19 (92 aa).

Belongs to the universal ribosomal protein uS19 family.

Its function is as follows. Protein S19 forms a complex with S13 that binds strongly to the 16S ribosomal RNA. The protein is Small ribosomal subunit protein uS19 of Polynucleobacter asymbioticus (strain DSM 18221 / CIP 109841 / QLW-P1DMWA-1) (Polynucleobacter necessarius subsp. asymbioticus).